Consider the following 520-residue polypeptide: Sodium-dependent dicarboxylate transporter SdcS (520 aa).

Transmembrane regions (helical) follow at residues 30–50 (AGQLIGLILGPLLFLLTLLFF), 55–75 (LPWEGVYVLAITLWIATWWIT), 77–97 (AIPIAATSLLPIVLLPLGHIL), 104–124 (SEYGNDIIFLFLGGFILAIAM), 160–180 (SMFVSNTAAVMIMIPIGLAII), 207–227 (IGYAGTIGGLGTLIGTPPLII), 242–262 (FAKWMIVGIPTVIVLLGITWL), 298–318 (KVVQTIFVLASLLWITREFLL), 323–343 (VTSSVADGTIAIFISILLFVI), 362–382 (ELPWGVLILFGGGLALAKGIS), 399–419 (GVSPILIVIVITIFVLFLTEV), 428–448 (MILPILATLSVAVGVHPLLLM), 452–472 (AMAANCAYMLPVGTPPNAIIF), and 491–511 (LISAIIIILVVYYVMPIVLGI).

This sequence belongs to the SLC13A/DASS transporter (TC 2.A.47) family. NADC subfamily.

Its subcellular location is the cell membrane. Its function is as follows. Mediates the transport of the dicarboxylates fumarate, malate, and succinate across the cytoplasmic membrane via a Na(+)-electrochemical gradient. The sequence is that of Sodium-dependent dicarboxylate transporter SdcS (sdcS) from Staphylococcus aureus (strain bovine RF122 / ET3-1).